The sequence spans 243 residues: Thiocyanate hydrolase subunit gamma (243 aa).

Residues Cys-128, Cys-131, Ser-132, and Cys-133 each contribute to the Co(3+) site. Cys-131 carries the cysteine sulfinic acid (-SO2H) modification. The residue at position 133 (Cys-133) is a Cysteine sulfenic acid (-SOH).

The protein belongs to the nitrile hydratase subunit alpha family. In terms of assembly, heterododecamer consisting of 4 alpha, 4 beta, and 4 gamma subunits. The cofactor is Co(3+).

It carries out the reaction thiocyanate + H2O + 2 H(+) = carbonyl sulfide + NH4(+). The protein operates within organosulfur degradation; thiocyanate degradation. In terms of biological role, involved in the degradation of thiocyanate. This is Thiocyanate hydrolase subunit gamma (scnC) from Thiobacillus thioparus.